A 272-amino-acid chain; its full sequence is Tryptophan synthase alpha chain (272 aa).

Catalysis depends on proton acceptor residues E49 and D60.

Belongs to the TrpA family. Tetramer of two alpha and two beta chains.

It carries out the reaction (1S,2R)-1-C-(indol-3-yl)glycerol 3-phosphate + L-serine = D-glyceraldehyde 3-phosphate + L-tryptophan + H2O. The protein operates within amino-acid biosynthesis; L-tryptophan biosynthesis; L-tryptophan from chorismate: step 5/5. The alpha subunit is responsible for the aldol cleavage of indoleglycerol phosphate to indole and glyceraldehyde 3-phosphate. The protein is Tryptophan synthase alpha chain of Psychrobacter cryohalolentis (strain ATCC BAA-1226 / DSM 17306 / VKM B-2378 / K5).